A 340-amino-acid chain; its full sequence is Arginine N-succinyltransferase subunit beta (340 aa).

Belongs to the succinylarginine dihydrolase family. Heterotetramer of two alpha and two beta subunits.

It carries out the reaction succinyl-CoA + L-arginine = N(2)-succinyl-L-arginine + CoA + H(+). It functions in the pathway amino-acid degradation; L-arginine degradation via AST pathway; L-glutamate and succinate from L-arginine: step 1/5. This chain is Arginine N-succinyltransferase subunit beta (aruG), found in Pseudomonas aeruginosa (strain ATCC 15692 / DSM 22644 / CIP 104116 / JCM 14847 / LMG 12228 / 1C / PRS 101 / PAO1).